The primary structure comprises 353 residues: Photosystem II D2 protein (353 aa).

Position 2 is an N-acetylthreonine (Thr-2). Residue Thr-2 is modified to Phosphothreonine. A helical transmembrane segment spans residues 41-61 (CAYFALGGWLTGTTFVTSWYT). His-118 lines the chlorophyll a pocket. Residues 125–141 (GFMLRQFEIARSVQLRP) traverse the membrane as a helical segment. Residues Gln-130 and Asn-143 each contribute to the pheophytin a site. Residues 153-166 (VFVSVFLIYPLGQS) traverse the membrane as a helical segment. His-198 provides a ligand contact to chlorophyll a. Residues 208–228 (AALLCAIHGATVENTIFEDGD) traverse the membrane as a helical segment. The a plastoquinone site is built by His-215 and Phe-262. His-215 is a Fe cation binding site. His-269 is a Fe cation binding site. A helical membrane pass occupies residues 279 to 295 (GLWMSAVGVVGLAVNLR).

Belongs to the reaction center PufL/M/PsbA/D family. As to quaternary structure, PSII is composed of 1 copy each of membrane proteins PsbA, PsbB, PsbC, PsbD, PsbE, PsbF, PsbH, PsbI, PsbJ, PsbK, PsbL, PsbM, PsbT, PsbX, PsbY, PsbZ, Psb30/Ycf12, at least 3 peripheral proteins of the oxygen-evolving complex and a large number of cofactors. It forms dimeric complexes. The D1/D2 heterodimer binds P680, chlorophylls that are the primary electron donor of PSII, and subsequent electron acceptors. It shares a non-heme iron and each subunit binds pheophytin, quinone, additional chlorophylls, carotenoids and lipids. There is also a Cl(-1) ion associated with D1 and D2, which is required for oxygen evolution. The PSII complex binds additional chlorophylls, carotenoids and specific lipids. is required as a cofactor.

It is found in the plastid. The protein localises to the chloroplast thylakoid membrane. It carries out the reaction 2 a plastoquinone + 4 hnu + 2 H2O = 2 a plastoquinol + O2. In terms of biological role, photosystem II (PSII) is a light-driven water:plastoquinone oxidoreductase that uses light energy to abstract electrons from H(2)O, generating O(2) and a proton gradient subsequently used for ATP formation. It consists of a core antenna complex that captures photons, and an electron transfer chain that converts photonic excitation into a charge separation. The D1/D2 (PsbA/PsbD) reaction center heterodimer binds P680, the primary electron donor of PSII as well as several subsequent electron acceptors. D2 is needed for assembly of a stable PSII complex. The polypeptide is Photosystem II D2 protein (Chaetosphaeridium globosum (Charophycean green alga)).